Reading from the N-terminus, the 573-residue chain is Protein FAM227B (573 aa).

Residues 429–485 (DNKKDFKRVKQRIKDDIKFLKEQQEQIDKELDRLQAKASKNLQEVKNDFENFLHKLR) are a coiled coil. Over residues 497 to 521 (SASPSESLQSLQSPNSSLSSPAMSE) the composition is skewed to low complexity. Residues 497 to 528 (SASPSESLQSLQSPNSSLSSPAMSEDFNSVEE) form a disordered region.

It belongs to the FAM227 family.

The sequence is that of Protein FAM227B (Fam227b) from Rattus norvegicus (Rat).